The chain runs to 1158 residues: ATP-dependent helicase/deoxyribonuclease subunit B (1158 aa).

Belongs to the helicase family. AddB/RexB type 2 subfamily. In terms of assembly, heterodimer of AddA and RexB. Requires Mg(2+) as cofactor.

In terms of biological role, the heterodimer acts as both an ATP-dependent DNA helicase and an ATP-dependent, dual-direction single-stranded exonuclease. Recognizes the chi site generating a DNA molecule suitable for the initiation of homologous recombination. This subunit has 5' -&gt; 3' nuclease activity but not helicase activity. This chain is ATP-dependent helicase/deoxyribonuclease subunit B, found in Lactobacillus johnsonii (strain CNCM I-12250 / La1 / NCC 533).